The chain runs to 870 residues: A-kinase anchor protein 2 (870 aa).

2 disordered regions span residues 14–43 and 103–165; these read PGITSTPHSKDHSSPFYSPSHNGLLTDHHE and IEKA…SSRD. Ser122 carries the post-translational modification Phosphoserine. A compositionally biased stretch (polar residues) spans 133-151; that stretch reads GHSTDQPQDMLGNSLQAPA. Ser152 is subject to Phosphoserine. Residues 152–161 are compositionally biased toward low complexity; that stretch reads SPSSSTSSHC. A Glycyl lysine isopeptide (Lys-Gly) (interchain with G-Cter in SUMO1); alternate cross-link involves residue Lys174. Lys174 participates in a covalent cross-link: Glycyl lysine isopeptide (Lys-Gly) (interchain with G-Cter in SUMO2); alternate. The stretch at 213–307 forms a coiled coil; that stretch reads EEMIELEKER…QQQQLSTSQL (95 aa). The tract at residues 233 to 324 is disordered; the sequence is KNPGIAAKWW…EHLDSIEHTK (92 aa). Basic and acidic residues predominate over residues 259–274; it reads LESHRKYKERKEKRAQ. Residues 275 to 302 show a composition bias toward low complexity; that stretch reads QEQLQLQQQQQQQLQQLQQLQQQQQQQL. A compositionally biased stretch (basic and acidic residues) spans 313–324; the sequence is AHEHLDSIEHTK. Ser347 is modified (phosphoserine). Residues 409–436 form a disordered region; sequence ESQSAGAGTGNAATQGKEGPYSEPSKRG. The segment covering 410 to 424 has biased composition (low complexity); sequence SQSAGAGTGNAATQG. Residues Ser472, Ser476, and Ser528 each carry the phosphoserine modification. A compositionally biased stretch (polar residues) spans 506-543; sequence FSMDNISDSGASNETPNALQENSLADFSLPQTPQTDNP. Disordered regions lie at residues 506-577 and 595-688; these read FSMD…DPLE and QVDK…RPEG. The residue at position 537 (Thr537) is a Phosphothreonine. Residues 576–589 form a PKA-RII subunit binding domain region; that stretch reads LEYQAGLLVQNAIQ. Positions 595–608 are enriched in basic and acidic residues; sequence QVDKAEVHTSKEGS. Phosphoserine is present on Ser641. The span at 644 to 665 shows a compositional bias: basic and acidic residues; sequence QEKRDVLPKILPGEDKTLREKG. Residues 720–755 are a coiled coil; sequence KLRSRKQRTLSMIEEEIRAAQEREEELKRQRQVRQS. Phosphoserine occurs at positions 730, 758, 789, and 796. The disordered stretch occupies residues 740-814; that stretch reads QEREEELKRQ…EAAGAQRPKN (75 aa). The segment covering 755–774 has biased composition (polar residues); sequence STPSPRAQNAPSLPSRTTCY.

It is found in the apical cell membrane. Functionally, binds to regulatory subunit (RII) of protein kinase A. May be involved in establishing polarity in signaling systems or in integrating PKA-RII isoforms with downstream effectors to capture, amplify and focus diffuse, trans-cellular signals carried by cAMP. Binds to and modulates the structure of the actin cytoskeleton. The chain is A-kinase anchor protein 2 from Rattus norvegicus (Rat).